Consider the following 242-residue polypeptide: Orotidine 5'-phosphate decarboxylase (242 aa).

Residues Asp-21, Lys-43, 71-80 (DLKFFDVPET), Thr-124, Arg-185, Gln-195, Gly-215, and Arg-216 each bind substrate. The active-site Proton donor is the Lys-73.

The protein belongs to the OMP decarboxylase family. Type 1 subfamily. In terms of assembly, homodimer.

It catalyses the reaction orotidine 5'-phosphate + H(+) = UMP + CO2. It participates in pyrimidine metabolism; UMP biosynthesis via de novo pathway; UMP from orotate: step 2/2. Functionally, catalyzes the decarboxylation of orotidine 5'-monophosphate (OMP) to uridine 5'-monophosphate (UMP). This chain is Orotidine 5'-phosphate decarboxylase, found in Methylococcus capsulatus (strain ATCC 33009 / NCIMB 11132 / Bath).